Reading from the N-terminus, the 773-residue chain is Preaspterpenacid I synthase sttA (773 aa).

Residues 4 to 359 (ISDVMKHCVP…RYHRTDLATT (356 aa)) are sesterterpenoid synthase. Asp-105 lines the Mg(2+) pocket. Asp-105 serves as a coordination point for substrate. The interval 211–214 (RVNE) is substrate. Asn-255 serves as a coordination point for substrate. Substrate regions lie at residues 259–263 (SFPKE) and 350–351 (RY). The geranylfarnesyl diphosphate synthase stretch occupies residues 360 to 769 (AEDRATLIGK…RMMLLGMGPK (410 aa)). The interval 423-447 (AFKKRNSRNGKQNGTEGSKSTFTNG) is disordered. The segment covering 431–447 (NGKQNGTEGSKSTFTNG) has biased composition (polar residues). Positions 493, 496, and 525 each coordinate isopentenyl diphosphate. Mg(2+) contacts are provided by Asp-532 and Asp-536. Residue Arg-541 coordinates dimethylallyl diphosphate. Arg-542 is a binding site for isopentenyl diphosphate. 5 residues coordinate dimethylallyl diphosphate: Lys-614, Thr-615, Gln-652, Asn-659, and Lys-669.

The protein in the N-terminal section; belongs to the terpene synthase family. This sequence in the C-terminal section; belongs to the FPP/GGPP synthase family.

It catalyses the reaction 4 isopentenyl diphosphate + dimethylallyl diphosphate = (2E,6E,10E,14E)-geranylfarnesyl diphosphate + 4 diphosphate. It carries out the reaction (2E,6E,10E,14E)-geranylfarnesyl diphosphate + H2O = preaspterpenacid acid I + diphosphate. Its pathway is secondary metabolite biosynthesis; terpenoid biosynthesis. In terms of biological role, sesterterpenoid synthase; part of the gene cluster that mediates the biosynthesis of aspterpenacids. Performs both prenyl transferase and terpene cyclase activity, converting isopentenyl diphosphate and dimethylallyl diphosphate into geranylfarnesyl diphosphate (GFPP) and then converting GFPP into preaspterpenacid I. C22-oxidative modification of preaspterpenacid I by the cytochrome P450 monooxygenase sttB then leads to preaspterpenacid II. It has still to be determined how preaspterpenacid II is further modified to produce aspterpenacids. This is Preaspterpenacid I synthase sttA from Aspergillus terreus (strain NIH 2624 / FGSC A1156).